We begin with the raw amino-acid sequence, 122 residues long: Acidic phospholipase A2 2 (122 aa).

Cystine bridges form between Cys-26–Cys-115, Cys-28–Cys-44, Cys-43–Cys-95, Cys-49–Cys-122, Cys-50–Cys-88, Cys-57–Cys-81, and Cys-75–Cys-86. Residues Tyr-27, Gly-29, and Gly-31 each coordinate Ca(2+). His-47 is an active-site residue. Residue Asp-48 coordinates Ca(2+). Residue Asp-89 is part of the active site.

Belongs to the phospholipase A2 family. Group II subfamily. D49 sub-subfamily. Requires Ca(2+) as cofactor. As to expression, expressed by the venom gland.

Its subcellular location is the secreted. It catalyses the reaction a 1,2-diacyl-sn-glycero-3-phosphocholine + H2O = a 1-acyl-sn-glycero-3-phosphocholine + a fatty acid + H(+). Snake venom phospholipase A2 (PLA2) that has high lipolytic activity. PLA2 catalyzes the calcium-dependent hydrolysis of the 2-acyl groups in 3-sn-phosphoglycerides. The sequence is that of Acidic phospholipase A2 2 from Craspedocephalus gramineus (Bamboo pit viper).